Consider the following 778-residue polypeptide: LPS-assembly protein LptD (778 aa).

An N-terminal signal peptide occupies residues 1-23 (MKTRYSVLSVAMTAAFYTQYAQA).

The protein belongs to the LptD family. Component of the lipopolysaccharide transport and assembly complex. Interacts with LptE and LptA.

It localises to the cell outer membrane. In terms of biological role, together with LptE, is involved in the assembly of lipopolysaccharide (LPS) at the surface of the outer membrane. In Actinobacillus pleuropneumoniae serotype 5b (strain L20), this protein is LPS-assembly protein LptD.